Consider the following 747-residue polypeptide: Kinesin-like protein KIF3B (747 aa).

N-acetylmethionine is present on Met-1. At Ser-2 the chain carries N-acetylserine; in Kinesin-like protein KIF3B, N-terminally processed. In terms of domain architecture, Kinesin motor spans 9–340; it reads SVRVVVRCRP…LRYANRAKNI (332 aa). ATP is bound at residue 96-103; the sequence is GQTGTGKT. The stretch at 346-579 forms a coiled coil; that stretch reads VNEDPKDALL…EQTQNELTRE (234 aa). Disordered stretches follow at residues 374–412 and 698–747; these read IGRR…DKDD and IQVD…LVPK. Residues 393–411 show a composition bias toward acidic residues; it reads GEEEEEEGEEGEEDGDDKD. The interval 580–747 is globular; it reads LKLKHLIIEN…YPQSRGLVPK (168 aa). Residues 701–710 are compositionally biased toward polar residues; the sequence is DASSFESTAS. The span at 711 to 721 shows a compositional bias: basic residues; sequence RKPKARPKSGR. The segment covering 722-735 has biased composition (low complexity); that stretch reads KSGSSSSSSGNPAS.

Belongs to the TRAFAC class myosin-kinesin ATPase superfamily. Kinesin family. Kinesin II subfamily. In terms of assembly, heterodimer of KIF3A and KIF3B. KIF3A/KIF3B heterodimer interacts with KIFAP3 forming a heterotrimeric (KIF3A/KIF3B/KIFAP3) complex. Interacts with the SMC3 subunit of the cohesin complex. Interacts directly with IFT20. Interacts with FLCN.

Its subcellular location is the cytoplasm. It localises to the cytoskeleton. The protein localises to the cell projection. It is found in the cilium. The protein resides in the dendritic spine. Its function is as follows. Microtubule-based molecular motor that transport intracellular cargos, such as vesicles, organelles and protein complexes. Uses ATP hydrolysis to generate force to bind and move along the microtubule. Plays a role in cilia formation. Involved in photoreceptor integrity and opsin trafficking in rod photoreceptors. Transports vesicles containing N-methyl-D-aspartate (NMDA) receptor subunit GRIN2A into neuronal dendrites. The sequence is that of Kinesin-like protein KIF3B from Mus musculus (Mouse).